We begin with the raw amino-acid sequence, 643 residues long: Threonine--tRNA ligase (643 aa).

Positions 1–61 (MPIITLPDGS…SEDATLEIIT (61 aa)) constitute a TGS domain. Residues 243–534 (DHRKIGKALD…ITEEYAGFFP (292 aa)) form a catalytic region. 3 residues coordinate Zn(2+): C334, H385, and H511.

Belongs to the class-II aminoacyl-tRNA synthetase family. As to quaternary structure, homodimer. Zn(2+) serves as cofactor.

It localises to the cytoplasm. The catalysed reaction is tRNA(Thr) + L-threonine + ATP = L-threonyl-tRNA(Thr) + AMP + diphosphate + H(+). Catalyzes the attachment of threonine to tRNA(Thr) in a two-step reaction: L-threonine is first activated by ATP to form Thr-AMP and then transferred to the acceptor end of tRNA(Thr). Also edits incorrectly charged L-seryl-tRNA(Thr). The polypeptide is Threonine--tRNA ligase (Glaesserella parasuis serovar 5 (strain SH0165) (Haemophilus parasuis)).